Here is a 377-residue protein sequence, read N- to C-terminus: 3-dehydroquinate synthase (377 aa).

NAD(+) contacts are provided by residues 115–119, 139–140, lysine 152, and lysine 161; these read GVIGD and TS. Positions 194, 256, and 275 each coordinate Zn(2+).

Belongs to the sugar phosphate cyclases superfamily. Dehydroquinate synthase family. Requires NAD(+) as cofactor. Co(2+) is required as a cofactor. The cofactor is Zn(2+).

The protein resides in the cytoplasm. It carries out the reaction 7-phospho-2-dehydro-3-deoxy-D-arabino-heptonate = 3-dehydroquinate + phosphate. It functions in the pathway metabolic intermediate biosynthesis; chorismate biosynthesis; chorismate from D-erythrose 4-phosphate and phosphoenolpyruvate: step 2/7. Catalyzes the conversion of 3-deoxy-D-arabino-heptulosonate 7-phosphate (DAHP) to dehydroquinate (DHQ). This Rhizobium meliloti (strain 1021) (Ensifer meliloti) protein is 3-dehydroquinate synthase.